The following is a 277-amino-acid chain: Protein CMSS1 (277 aa).

Acidic residues predominate over residues methionine 1 to alanine 14. The disordered stretch occupies residues methionine 1 to glutamate 91. Over residues glutamate 24–glycine 34 the composition is skewed to basic and acidic residues. The segment covering asparagine 35–glutamate 52 has biased composition (basic residues). The segment covering valine 53–proline 66 has biased composition (basic and acidic residues).

It belongs to the CMS1 family.

This chain is Protein CMSS1 (cmss1), found in Xenopus laevis (African clawed frog).